The sequence spans 396 residues: Acetate kinase (396 aa).

Residue N8 participates in Mg(2+) binding. Position 15 (K15) interacts with ATP. R90 serves as a coordination point for substrate. The active-site Proton donor/acceptor is D147. ATP is bound by residues 207–211 (HLGSG), 283–285 (DMR), and 330–334 (GIGEN). E384 serves as a coordination point for Mg(2+).

It belongs to the acetokinase family. As to quaternary structure, homodimer. It depends on Mg(2+) as a cofactor. Requires Mn(2+) as cofactor.

Its subcellular location is the cytoplasm. The catalysed reaction is acetate + ATP = acetyl phosphate + ADP. Its pathway is metabolic intermediate biosynthesis; acetyl-CoA biosynthesis; acetyl-CoA from acetate: step 1/2. In terms of biological role, catalyzes the formation of acetyl phosphate from acetate and ATP. Can also catalyze the reverse reaction. The sequence is that of Acetate kinase from Lacticaseibacillus paracasei (strain ATCC 334 / BCRC 17002 / CCUG 31169 / CIP 107868 / KCTC 3260 / NRRL B-441) (Lactobacillus paracasei).